Consider the following 862-residue polypeptide: DNA mismatch repair protein MutS (862 aa).

Residue 608–615 (GPNMAGKS) coordinates ATP.

The protein belongs to the DNA mismatch repair MutS family.

In terms of biological role, this protein is involved in the repair of mismatches in DNA. It is possible that it carries out the mismatch recognition step. This protein has a weak ATPase activity. This is DNA mismatch repair protein MutS from Bacteroides thetaiotaomicron (strain ATCC 29148 / DSM 2079 / JCM 5827 / CCUG 10774 / NCTC 10582 / VPI-5482 / E50).